The following is a 420-amino-acid chain: Glutamyl-tRNA reductase (420 aa).

Residues 49 to 52 (TCNR), S110, 115 to 117 (EHQ), and Q121 each bind substrate. C50 functions as the Nucleophile in the catalytic mechanism. 190–195 (GSGTIN) contacts NADP(+).

This sequence belongs to the glutamyl-tRNA reductase family. In terms of assembly, homodimer.

The enzyme catalyses (S)-4-amino-5-oxopentanoate + tRNA(Glu) + NADP(+) = L-glutamyl-tRNA(Glu) + NADPH + H(+). Its pathway is porphyrin-containing compound metabolism; protoporphyrin-IX biosynthesis; 5-aminolevulinate from L-glutamyl-tRNA(Glu): step 1/2. Catalyzes the NADPH-dependent reduction of glutamyl-tRNA(Glu) to glutamate 1-semialdehyde (GSA). The protein is Glutamyl-tRNA reductase of Wigglesworthia glossinidia brevipalpis.